Reading from the N-terminus, the 378-residue chain is Ribosomal RNA large subunit methyltransferase G (378 aa).

This sequence belongs to the methyltransferase superfamily. RlmG family.

It localises to the cytoplasm. The catalysed reaction is guanosine(1835) in 23S rRNA + S-adenosyl-L-methionine = N(2)-methylguanosine(1835) in 23S rRNA + S-adenosyl-L-homocysteine + H(+). Specifically methylates the guanine in position 1835 (m2G1835) of 23S rRNA. The chain is Ribosomal RNA large subunit methyltransferase G from Shewanella sp. (strain W3-18-1).